We begin with the raw amino-acid sequence, 309 residues long: CDK-activating kinase assembly factor MAT1 (309 aa).

The residue at position 1 (Met-1) is an N-acetylmethionine. The RING-type zinc finger occupies 6–50 (CPRCKTTKYRNPSLKLMVNVCGHTLCESCVDLLFVRGAGNCPECG). Thr-51 is modified (phosphothreonine). One can recognise a UIM domain in the interval 142-161 (REQEELEEALEVERQEHEQR). Position 279 is a phosphoserine (Ser-279).

As to quaternary structure, associates primarily with CDK7 and cyclin H to form the CAK complex. CAK can further associate with the core-TFIIH to form the TFIIH basal transcription factor.

It is found in the nucleus. Stabilizes the cyclin H-CDK7 complex to form a functional CDK-activating kinase (CAK) enzymatic complex. CAK activates the cyclin-associated kinases CDK1, CDK2, CDK4 and CDK6 by threonine phosphorylation. CAK complexed to the core-TFIIH basal transcription factor activates RNA polymerase II by serine phosphorylation of the repetitive C-terminal domain (CTD) of its large subunit (POLR2A), allowing its escape from the promoter and elongation of the transcripts. Involved in cell cycle control and in RNA transcription by RNA polymerase II. In Mus musculus (Mouse), this protein is CDK-activating kinase assembly factor MAT1 (Mnat1).